The primary structure comprises 574 residues: DNA-directed primase/polymerase protein (574 aa).

Positions 2–22 form a coiled coil; it reads KRKWEERVKKVEELASYYERN. Residues arginine 76, 116-118, 167-171, 291-294, and lysine 300 contribute to the substrate site; these read DLE, KFSRH, and RNFR. Aspartate 116 and glutamate 118 together coordinate Mn(2+). Zn(2+) contacts are provided by cysteine 424, histidine 431, cysteine 451, and cysteine 456. Residues 424 to 457 carry the Zinc knuckle motif motif; it reads CENIGRAHRSNNIMILVDLKKEVWYQKCHDPVCR.

This sequence belongs to the eukaryotic-type primase small subunit family. Mn(2+) is required as a cofactor.

The protein localises to the nucleus. Its subcellular location is the mitochondrion matrix. It localises to the chromosome. It carries out the reaction ssDNA + n NTP = ssDNA/pppN(pN)n-1 hybrid + (n-1) diphosphate.. The enzyme catalyses DNA(n) + a 2'-deoxyribonucleoside 5'-triphosphate = DNA(n+1) + diphosphate. Its function is as follows. DNA primase and DNA polymerase required to tolerate replication-stalling lesions by bypassing them. Required to facilitate mitochondrial and nuclear replication fork progression by initiating de novo DNA synthesis using dNTPs and acting as an error-prone DNA polymerase able to bypass certain DNA lesions. Shows a high capacity to tolerate DNA damage lesions such as 8oxoG and abasic sites in DNA. Provides different translesion synthesis alternatives when DNA replication is stalled: able to synthesize DNA primers downstream of lesions, such as UV lesions, R-loops and G-quadruplexes, to allow DNA replication to continue. Can also realign primers ahead of 'unreadable lesions' such as abasic sites and 6-4 photoproduct (6-4 pyrimidine-pyrimidinone), thereby skipping the lesion. Repriming avoids fork degradation while leading to accumulation of internal ssDNA gaps behind the forks. Also able to incorporate nucleotides opposite DNA lesions such as 8oxoG, like a regular translesion synthesis DNA polymerase. Also required for reinitiating stalled forks after ultraviolet (UV) damage during nuclear DNA replication. Required for mitochondrial DNA (mtDNA) synthesis and replication, by reinitiating synthesis after UV damage or in the presence of chain-terminating nucleotides. In addition to its role in DNA damage response, also required to maintain efficient nuclear and mitochondrial DNA replication in unperturbed cells. The polypeptide is DNA-directed primase/polymerase protein (Gallus gallus (Chicken)).